The following is a 464-amino-acid chain: ATP synthase subunit beta (464 aa).

153 to 160 (GGAGVGKT) is an ATP binding site.

The protein belongs to the ATPase alpha/beta chains family. F-type ATPases have 2 components, CF(1) - the catalytic core - and CF(0) - the membrane proton channel. CF(1) has five subunits: alpha(3), beta(3), gamma(1), delta(1), epsilon(1). CF(0) has three main subunits: a(1), b(2) and c(9-12). The alpha and beta chains form an alternating ring which encloses part of the gamma chain. CF(1) is attached to CF(0) by a central stalk formed by the gamma and epsilon chains, while a peripheral stalk is formed by the delta and b chains.

The protein resides in the cell membrane. The enzyme catalyses ATP + H2O + 4 H(+)(in) = ADP + phosphate + 5 H(+)(out). Its function is as follows. Produces ATP from ADP in the presence of a proton gradient across the membrane. The catalytic sites are hosted primarily by the beta subunits. This is ATP synthase subunit beta from Alkaliphilus oremlandii (strain OhILAs) (Clostridium oremlandii (strain OhILAs)).